Reading from the N-terminus, the 254-residue chain is 5-oxoprolinase subunit A (254 aa).

Belongs to the LamB/PxpA family. As to quaternary structure, forms a complex composed of PxpA, PxpB and PxpC.

The catalysed reaction is 5-oxo-L-proline + ATP + 2 H2O = L-glutamate + ADP + phosphate + H(+). Functionally, catalyzes the cleavage of 5-oxoproline to form L-glutamate coupled to the hydrolysis of ATP to ADP and inorganic phosphate. The sequence is that of 5-oxoprolinase subunit A from Bacillus mycoides (strain KBAB4) (Bacillus weihenstephanensis).